The following is a 417-amino-acid chain: NADH-quinone oxidoreductase subunit D (417 aa).

The protein belongs to the complex I 49 kDa subunit family. As to quaternary structure, NDH-1 is composed of 14 different subunits. Subunits NuoB, C, D, E, F, and G constitute the peripheral sector of the complex.

The protein resides in the cell inner membrane. The enzyme catalyses a quinone + NADH + 5 H(+)(in) = a quinol + NAD(+) + 4 H(+)(out). NDH-1 shuttles electrons from NADH, via FMN and iron-sulfur (Fe-S) centers, to quinones in the respiratory chain. The immediate electron acceptor for the enzyme in this species is believed to be ubiquinone. Couples the redox reaction to proton translocation (for every two electrons transferred, four hydrogen ions are translocated across the cytoplasmic membrane), and thus conserves the redox energy in a proton gradient. The chain is NADH-quinone oxidoreductase subunit D from Burkholderia ambifaria (strain ATCC BAA-244 / DSM 16087 / CCUG 44356 / LMG 19182 / AMMD) (Burkholderia cepacia (strain AMMD)).